The sequence spans 175 residues: Large ribosomal subunit protein uL10 (175 aa).

Belongs to the universal ribosomal protein uL10 family. In terms of assembly, part of the ribosomal stalk of the 50S ribosomal subunit. The N-terminus interacts with L11 and the large rRNA to form the base of the stalk. The C-terminus forms an elongated spine to which L12 dimers bind in a sequential fashion forming a multimeric L10(L12)X complex.

Functionally, forms part of the ribosomal stalk, playing a central role in the interaction of the ribosome with GTP-bound translation factors. The protein is Large ribosomal subunit protein uL10 of Synechococcus sp. (strain WH7803).